Consider the following 489-residue polypeptide: WPP domain-interacting protein 1 (489 aa).

The disordered stretch occupies residues 49–73; it reads SNSVELGKPMSFDSPGDGGGAYSPV. 3 short sequence motifs (nuclear localization signal) span residues 80-81, 83-84, and 104-105; these read RK, RR, and KR. Positions 195–264 are disordered; sequence PMISSGQGGN…DDAGGEGGES (70 aa). Residues 215 to 224 show a composition bias toward basic and acidic residues; that stretch reads GESVDFEKEN. Residues 323–446 adopt a coiled-coil conformation; it reads EIVTLVNNVE…QDLQNDCIEI (124 aa). The 31-residue stretch at 459–489 folds into the KASH domain; the sequence is SYVLIQLVLLSTVVLLLLSQLLPEPDTVVPT. The chain crosses the membrane as a helical span at residues 460 to 480; the sequence is YVLIQLVLLSTVVLLLLSQLL.

In terms of assembly, homodimer and heterodimer with WIP2. Component of Ran complexes at least composed of WIT1 or WIT2, RANGAP1 or RANGAP2, and WIP1 or WIP2 or WIP3. Interacts with RANGAP1, RANGAP2, WPP1/MAF1, and WPP2/MAF2. Interacts with SUN1 and SUN2. Interacts with KIN1. Core component of the LINC complex which is composed of inner nuclear membrane SUN domain-containing proteins coupled to outer nuclear membrane WIP and WIT proteins. The LINC complex also involves nucleoskeletal proteins CRWN/LINC and possibly KAKU4 and the cytoskeletal myosin KAKU1. Interacts with WIT1 and SUN2. Interacts with WIT2. Interacts with SUN3. As to expression, expressed in seedlings, roots, stems, leaves, and flowers.

It localises to the nucleus envelope. The protein localises to the nucleus membrane. In terms of biological role, mediates and enhances the nuclear envelope docking of RANGAP proteins mediated by WIT1 and WIT2 in the undifferentiated cells of root tips. As component of the SUN-WIP-WIT2-KAKU1 complex, mediates the transfer of cytoplasmic forces to the nuclear envelope (NE), leading to nuclear shape changes. The protein is WPP domain-interacting protein 1 (WIP1) of Arabidopsis thaliana (Mouse-ear cress).